We begin with the raw amino-acid sequence, 118 residues long: NADH-ubiquinone oxidoreductase chain 3 (118 aa).

Helical transmembrane passes span 9 to 29, 62 to 82, and 87 to 107; these read IYLVISLLVSLILLGVPFLFA, LVSILFIIFDLEVTFFFPWAV, and IDLFGFWSMMAFLLILFIGSL.

It belongs to the complex I subunit 3 family.

Its subcellular location is the mitochondrion membrane. The catalysed reaction is a ubiquinone + NADH + 5 H(+)(in) = a ubiquinol + NAD(+) + 4 H(+)(out). Core subunit of the mitochondrial membrane respiratory chain NADH dehydrogenase (Complex I) that is believed to belong to the minimal assembly required for catalysis. Complex I functions in the transfer of electrons from NADH to the respiratory chain. The immediate electron acceptor for the enzyme is believed to be ubiquinone. The sequence is that of NADH-ubiquinone oxidoreductase chain 3 (ND3) from Zea mays (Maize).